The sequence spans 473 residues: LEC14B protein (473 aa).

WD repeat units follow at residues 212-242 (GYSF…CVYD), 254-285 (AHES…KVWD), 301-331 (GHLE…KLWD), 377-413 (GHSV…YIYD), and 425-455 (YHKA…VKWE).

The protein belongs to the WD repeat LEC14B family.

The protein is LEC14B protein of Lithospermum erythrorhizon (Purple gromwell).